Reading from the N-terminus, the 117-residue chain is Putative iron-sulfur cluster insertion protein ErpA (117 aa).

Residues C45, C109, and C111 each coordinate iron-sulfur cluster.

The protein belongs to the HesB/IscA family. In terms of assembly, homodimer. Requires iron-sulfur cluster as cofactor.

Required for insertion of 4Fe-4S clusters. This is Putative iron-sulfur cluster insertion protein ErpA from Chromobacterium violaceum (strain ATCC 12472 / DSM 30191 / JCM 1249 / CCUG 213 / NBRC 12614 / NCIMB 9131 / NCTC 9757 / MK).